Consider the following 367-residue polypeptide: tRNA-specific 2-thiouridylase MnmA 2 (367 aa).

ATP is bound by residues 10 to 17 and Met-36; that span reads GMSGGVDS. Residues 96-98 are interaction with target base in tRNA; sequence NPD. The active-site Nucleophile is the Cys-101. An intrachain disulfide couples Cys-101 to Cys-197. An ATP-binding site is contributed by Gly-125. The interaction with tRNA stretch occupies residues 147-149; it reads KDQ. Cys-197 acts as the Cysteine persulfide intermediate in catalysis. Residues 314–315 form an interaction with tRNA region; the sequence is RY.

This sequence belongs to the MnmA/TRMU family.

The protein resides in the cytoplasm. The enzyme catalyses S-sulfanyl-L-cysteinyl-[protein] + uridine(34) in tRNA + AH2 + ATP = 2-thiouridine(34) in tRNA + L-cysteinyl-[protein] + A + AMP + diphosphate + H(+). Its function is as follows. Catalyzes the 2-thiolation of uridine at the wobble position (U34) of tRNA, leading to the formation of s(2)U34. The sequence is that of tRNA-specific 2-thiouridylase MnmA 2 from Aliarcobacter butzleri (strain RM4018) (Arcobacter butzleri).